The sequence spans 192 residues: Ribosomal RNA large subunit methyltransferase E (192 aa).

S-adenosyl-L-methionine is bound by residues Gly48, Phe50, Asp67, Asp85, and Asp107. Lys147 functions as the Proton acceptor in the catalytic mechanism.

Belongs to the class I-like SAM-binding methyltransferase superfamily. RNA methyltransferase RlmE family.

Its subcellular location is the cytoplasm. It carries out the reaction uridine(2552) in 23S rRNA + S-adenosyl-L-methionine = 2'-O-methyluridine(2552) in 23S rRNA + S-adenosyl-L-homocysteine + H(+). Functionally, specifically methylates the uridine in position 2552 of 23S rRNA at the 2'-O position of the ribose in the fully assembled 50S ribosomal subunit. In Borrelia garinii subsp. bavariensis (strain ATCC BAA-2496 / DSM 23469 / PBi) (Borreliella bavariensis), this protein is Ribosomal RNA large subunit methyltransferase E.